The following is a 259-amino-acid chain: Imidazole glycerol phosphate synthase subunit HisF (259 aa).

Active-site residues include D11 and D130.

It belongs to the HisA/HisF family. As to quaternary structure, heterodimer of HisH and HisF.

Its subcellular location is the cytoplasm. The enzyme catalyses 5-[(5-phospho-1-deoxy-D-ribulos-1-ylimino)methylamino]-1-(5-phospho-beta-D-ribosyl)imidazole-4-carboxamide + L-glutamine = D-erythro-1-(imidazol-4-yl)glycerol 3-phosphate + 5-amino-1-(5-phospho-beta-D-ribosyl)imidazole-4-carboxamide + L-glutamate + H(+). It participates in amino-acid biosynthesis; L-histidine biosynthesis; L-histidine from 5-phospho-alpha-D-ribose 1-diphosphate: step 5/9. In terms of biological role, IGPS catalyzes the conversion of PRFAR and glutamine to IGP, AICAR and glutamate. The HisF subunit catalyzes the cyclization activity that produces IGP and AICAR from PRFAR using the ammonia provided by the HisH subunit. The chain is Imidazole glycerol phosphate synthase subunit HisF from Carboxydothermus hydrogenoformans (strain ATCC BAA-161 / DSM 6008 / Z-2901).